Consider the following 248-residue polypeptide: Pulmonary surfactant-associated protein A (248 aa).

Positions 1–20 (MLLCSLTLTLLWMVASGLEC) are cleaved as a signal peptide. The 73-residue stretch at 28-100 (GSPGIPGTPG…PGERGPPGFP (73 aa)) folds into the Collagen-like domain. The interval 29–102 (SPGIPGTPGS…ERGPPGFPAY (74 aa)) is disordered. 9 positions are modified to 4-hydroxyproline: P30, P33, P36, P42, P54, P57, P63, P67, and P70. Positions 42 to 51 (PGRDGRDGIK) are enriched in basic and acidic residues. Over residues 54-65 (PGPPGPMGPPGG) the composition is skewed to pro residues. The span at 69-82 (LPGRDGMTGAPGLP) shows a compositional bias: low complexity. The span at 84–93 (ERGEKGEPGE) shows a compositional bias: basic and acidic residues. A C-type lectin domain is found at 132-248 (LAVGEKVFST…LQYRLAICEF (117 aa)). 2 disulfides stabilise this stretch: C155–C246 and C224–C238. N-linked (GlcNAc...) asparagine glycosylation occurs at N207. The Ca(2+) site is built by E215, R217, N234, and D235.

This sequence belongs to the SFTPA family. In terms of assembly, oligomeric complex of 6 set of homotrimers.

The protein localises to the secreted. The protein resides in the extracellular space. Its subcellular location is the extracellular matrix. It is found in the surface film. In presence of calcium ions, it binds to surfactant phospholipids and contributes to lower the surface tension at the air-liquid interface in the alveoli of the mammalian lung and is essential for normal respiration. Enhances the expression of MYO18A/SP-R210 on alveolar macrophages. The protein is Pulmonary surfactant-associated protein A (SFTPA1) of Bos taurus (Bovine).